The chain runs to 353 residues: Diacetylchitobiose uptake system permease protein NgcF (353 aa).

Positions 1–24 (MKDTIPTAETASRRPEPAARGGRP) are disordered. Helical transmembrane passes span 36-56 (FFLA…LIPF), 100-120 (LLAA…AVAI), 141-161 (IISF…WAQM), 197-217 (VMFV…IAAI), 254-274 (AYIY…AMVP), and 303-323 (TAMG…VFLV). The 226-residue stretch at 95-320 (LRNVALLAAF…AVTLVFAALV (226 aa)) folds into the ABC transmembrane type-1 domain. The tract at residues 329–353 (GGEGESKRKAPGSRARRAAAKGGAR) is disordered. A compositionally biased stretch (basic residues) spans 337-353 (KAPGSRARRAAAKGGAR).

Belongs to the binding-protein-dependent transport system permease family. The complex is composed of two ATP-binding proteins (MsiK), two transmembrane proteins (NgcF and NgcG) and a solute-binding protein (NgcE).

The protein localises to the cell membrane. In terms of biological role, part of the ABC transporter complex NgcEFG-MsiK involved in N,N'-diacetylchitobiose ((GlcNAc)2) uptake. Responsible for the translocation of the substrate across the membrane. In Streptomyces coelicolor (strain ATCC BAA-471 / A3(2) / M145), this protein is Diacetylchitobiose uptake system permease protein NgcF.